The following is a 396-amino-acid chain: Argininosuccinate synthase (396 aa).

9–17 is an ATP binding site; it reads AYSGGLDTS. Tyrosine 85 lines the L-citrulline pocket. Residue glycine 115 participates in ATP binding. Positions 117, 121, and 122 each coordinate L-aspartate. An L-citrulline-binding site is contributed by asparagine 121. The L-citrulline site is built by arginine 125, serine 173, glutamate 258, and tyrosine 270.

Belongs to the argininosuccinate synthase family. Type 1 subfamily. As to quaternary structure, homotetramer.

Its subcellular location is the cytoplasm. It catalyses the reaction L-citrulline + L-aspartate + ATP = 2-(N(omega)-L-arginino)succinate + AMP + diphosphate + H(+). It functions in the pathway amino-acid biosynthesis; L-arginine biosynthesis; L-arginine from L-ornithine and carbamoyl phosphate: step 2/3. This chain is Argininosuccinate synthase, found in Streptococcus mutans serotype c (strain ATCC 700610 / UA159).